The chain runs to 202 residues: uncharacterized protein (202 aa).

One can recognise a GST N-terminal domain in the interval 1-78 (MKLVGSYTSP…YIELMNVAPA (78 aa)). Residues Ser9, Val49, and 62-63 (DS) each bind glutathione. The region spanning 83–202 (DPLESLRVRK…SFARTEPPKA (120 aa)) is the GST C-terminal domain.

Belongs to the GST superfamily. HSP26 family.

Functionally, glutathione (GSH) transferase homolog, that might be involved in selenium metabolism. This is an uncharacterized protein from Escherichia coli (strain K12).